The following is a 315-amino-acid chain: Protoheme IX farnesyltransferase 1 (315 aa).

Helical transmembrane passes span 30–50 (PGIIISNSLAALGGFWIAWIQ), 56–76 (GGPGIFAAMAVAMIGTALVMA), 106–126 (IPPPVMILYGTCLGACGFIML), 132–152 (LTAVLGLLAFLLYAVVYTLWF), 162–182 (VGSFPGAAPPLIGYCALTGYI), 186–206 (AILLYAIMFLWQPPHFWAIGI), 249–269 (LYIDVSPFYTASALLLGAIWL), and 289–309 (FFYSIVYFSLLFLILMADSFI).

The protein belongs to the UbiA prenyltransferase family. Protoheme IX farnesyltransferase subfamily. Interacts with CtaA.

It localises to the cell membrane. It carries out the reaction heme b + (2E,6E)-farnesyl diphosphate + H2O = Fe(II)-heme o + diphosphate. The protein operates within porphyrin-containing compound metabolism; heme O biosynthesis; heme O from protoheme: step 1/1. Functionally, converts heme B (protoheme IX) to heme O by substitution of the vinyl group on carbon 2 of heme B porphyrin ring with a hydroxyethyl farnesyl side group. The chain is Protoheme IX farnesyltransferase 1 from Bacillus velezensis (strain DSM 23117 / BGSC 10A6 / LMG 26770 / FZB42) (Bacillus amyloliquefaciens subsp. plantarum).